The sequence spans 173 residues: Large ribosomal subunit protein uL16 (173 aa).

This sequence belongs to the universal ribosomal protein uL16 family.

The protein is Large ribosomal subunit protein uL16 of Methanococcus aeolicus (strain ATCC BAA-1280 / DSM 17508 / OCM 812 / Nankai-3).